Reading from the N-terminus, the 303-residue chain is UDP-N-acetylenolpyruvoylglucosamine reductase (303 aa).

Residues 29–196 (KIGGPADILI…LEAVLQLEQK (168 aa)) form the FAD-binding PCMH-type domain. The active site involves Arg-174. The active-site Proton donor is the Ser-225. Glu-295 is a catalytic residue.

Belongs to the MurB family. It depends on FAD as a cofactor.

The protein resides in the cytoplasm. The catalysed reaction is UDP-N-acetyl-alpha-D-muramate + NADP(+) = UDP-N-acetyl-3-O-(1-carboxyvinyl)-alpha-D-glucosamine + NADPH + H(+). It functions in the pathway cell wall biogenesis; peptidoglycan biosynthesis. Its function is as follows. Cell wall formation. The sequence is that of UDP-N-acetylenolpyruvoylglucosamine reductase from Bacillus velezensis (strain DSM 23117 / BGSC 10A6 / LMG 26770 / FZB42) (Bacillus amyloliquefaciens subsp. plantarum).